The chain runs to 296 residues: m7GpppN-mRNA hydrolase NUDT17 (296 aa).

The region spanning 90-236 is the Nudix hydrolase domain; sequence GRGVDVGVAV…DSGSPCGPLP (147 aa). Positions 129–150 match the Nudix box motif; sequence GHVELGEQLLEAGLRELQEETG. The Mg(2+) site is built by glutamate 144 and glutamate 148.

This sequence belongs to the Nudix hydrolase family. Mg(2+) serves as cofactor. It depends on Mn(2+) as a cofactor.

The enzyme catalyses a 5'-end (N(7)-methyl 5'-triphosphoguanosine)-ribonucleoside in mRNA + H2O = N(7)-methyl-GDP + a 5'-end phospho-ribonucleoside in mRNA + 2 H(+). Its function is as follows. Acts as a decapping enzyme capable of hydrolyzing monomethylated capped RNAs (in vitro). Hydrolyzes monomethylated capped RNA after alpha and beta phosphates to form N(7)-methyl-GDP. Shows low activity towards unmethylated capped RNA. The protein is m7GpppN-mRNA hydrolase NUDT17 (nudt17) of Xenopus laevis (African clawed frog).